Here is an 86-residue protein sequence, read N- to C-terminus: Large ribosomal subunit protein bL27 (86 aa).

The disordered stretch occupies residues 1 to 23 (MAHKKGTGSTRNGRDSNSKRLGV).

It belongs to the bacterial ribosomal protein bL27 family.

In Prochlorococcus marinus (strain MIT 9515), this protein is Large ribosomal subunit protein bL27.